We begin with the raw amino-acid sequence, 451 residues long: Tubulin alpha-2 chain (451 aa).

Gln12, Asp73, Ser142, Gly146, Thr147, Thr181, Asn208, and Asn230 together coordinate GTP. Asp73 contributes to the Mg(2+) binding site. The active site involves Glu256.

The protein belongs to the tubulin family. Dimer of alpha and beta chains. A typical microtubule is a hollow water-filled tube with an outer diameter of 25 nm and an inner diameter of 15 nM. Alpha-beta heterodimers associate head-to-tail to form protofilaments running lengthwise along the microtubule wall with the beta-tubulin subunit facing the microtubule plus end conferring a structural polarity. Microtubules usually have 13 protofilaments but different protofilament numbers can be found in some organisms and specialized cells. It depends on Mg(2+) as a cofactor.

It is found in the cytoplasm. The protein resides in the cytoskeleton. The catalysed reaction is GTP + H2O = GDP + phosphate + H(+). Tubulin is the major constituent of microtubules, a cylinder consisting of laterally associated linear protofilaments composed of alpha- and beta-tubulin heterodimers. Microtubules grow by the addition of GTP-tubulin dimers to the microtubule end, where a stabilizing cap forms. Below the cap, tubulin dimers are in GDP-bound state, owing to GTPase activity of alpha-tubulin. This Emericella nidulans (strain FGSC A4 / ATCC 38163 / CBS 112.46 / NRRL 194 / M139) (Aspergillus nidulans) protein is Tubulin alpha-2 chain (tubB).